Here is a 230-residue protein sequence, read N- to C-terminus: Probable thioesterase YBR096W (230 aa).

The protein belongs to the lcsJ thioesterase family.

The polypeptide is Probable thioesterase YBR096W (Saccharomyces cerevisiae (strain ATCC 204508 / S288c) (Baker's yeast)).